The chain runs to 312 residues: Acetyl-coenzyme A carboxylase carboxyl transferase subunit alpha (312 aa).

Positions 32–286 constitute a CoA carboxyltransferase C-terminal domain; the sequence is LLEERLARLR…KEALLKALEE (255 aa).

Belongs to the AccA family. In terms of assembly, acetyl-CoA carboxylase is a heterohexamer composed of biotin carboxyl carrier protein (AccB), biotin carboxylase (AccC) and two subunits each of ACCase subunit alpha (AccA) and ACCase subunit beta (AccD).

The protein localises to the cytoplasm. The enzyme catalyses N(6)-carboxybiotinyl-L-lysyl-[protein] + acetyl-CoA = N(6)-biotinyl-L-lysyl-[protein] + malonyl-CoA. It functions in the pathway lipid metabolism; malonyl-CoA biosynthesis; malonyl-CoA from acetyl-CoA: step 1/1. In terms of biological role, component of the acetyl coenzyme A carboxylase (ACC) complex. First, biotin carboxylase catalyzes the carboxylation of biotin on its carrier protein (BCCP) and then the CO(2) group is transferred by the carboxyltransferase to acetyl-CoA to form malonyl-CoA. The chain is Acetyl-coenzyme A carboxylase carboxyl transferase subunit alpha from Thermus thermophilus (strain ATCC BAA-163 / DSM 7039 / HB27).